The chain runs to 678 residues: Oviduct-specific glycoprotein (678 aa).

Residues 1–21 (MWKLLLWVGLVLVLKHHDGAA) form the signal peptide. Residues 22-385 (HKLVCYFTNW…YVLNDILVRA (364 aa)) form the GH18 domain. The cysteines at positions 26 and 51 are disulfide-linked. Residues 71–72 (LQ), 98–101 (GGWN), Tyr-142, 211–214 (LSYD), and Trp-355 each bind chitin. Residues Asn-402 and Asn-441 are each glycosylated (N-linked (GlcNAc...) asparagine). The tract at residues 524 to 544 (LTPVGHQSVTPVSHQSVSPGG) is disordered. The span at 528-544 (GHQSVTPVSHQSVSPGG) shows a compositional bias: polar residues. Asn-580, Asn-596, and Asn-648 each carry an N-linked (GlcNAc...) asparagine glycan. The tract at residues 581 to 606 (ISVTPEGQTMPLRGENLTSEVGTHPR) is disordered. Residues 651 to 662 (SVNSVTPQTSPL) show a composition bias toward polar residues. A disordered region spans residues 651-678 (SVNSVTPQTSPLSLKKEIPENSAVDEEA).

This sequence belongs to the glycosyl hydrolase 18 family. In terms of tissue distribution, oviduct.

The protein localises to the cytoplasmic vesicle. It is found in the secretory vesicle. Functionally, binds to oocyte zona pellucida in vivo. May play a role in the fertilization process and/or early embryonic development. This is Oviduct-specific glycoprotein (OVGP1) from Homo sapiens (Human).